A 380-amino-acid chain; its full sequence is Cytochrome b (380 aa).

4 helical membrane passes run 34 to 54, 78 to 99, 114 to 134, and 179 to 199; these read FGSL…LLAM, WLLH…FLHI, WNTG…GYVL, and FFAL…IHLM. Residues His84 and His98 each coordinate heme b. The heme b site is built by His183 and His197. His202 provides a ligand contact to a ubiquinone. Helical transmembrane passes span 227-247, 289-309, 321-341, and 348-368; these read IKDI…TLFS, LGGV…PFLH, LSQT…WVGS, and FIII…ILFP.

Belongs to the cytochrome b family. As to quaternary structure, the cytochrome bc1 complex contains 11 subunits: 3 respiratory subunits (MT-CYB, CYC1 and UQCRFS1), 2 core proteins (UQCRC1 and UQCRC2) and 6 low-molecular weight proteins (UQCRH/QCR6, UQCRB/QCR7, UQCRQ/QCR8, UQCR10/QCR9, UQCR11/QCR10 and a cleavage product of UQCRFS1). This cytochrome bc1 complex then forms a dimer. It depends on heme b as a cofactor.

It localises to the mitochondrion inner membrane. Functionally, component of the ubiquinol-cytochrome c reductase complex (complex III or cytochrome b-c1 complex) that is part of the mitochondrial respiratory chain. The b-c1 complex mediates electron transfer from ubiquinol to cytochrome c. Contributes to the generation of a proton gradient across the mitochondrial membrane that is then used for ATP synthesis. The sequence is that of Cytochrome b (MT-CYB) from Meleagris gallopavo (Wild turkey).